We begin with the raw amino-acid sequence, 161 residues long: Nucleotide-binding protein Aave_1854 (161 aa).

Belongs to the YajQ family.

Functionally, nucleotide-binding protein. This Paracidovorax citrulli (strain AAC00-1) (Acidovorax citrulli) protein is Nucleotide-binding protein Aave_1854.